The following is a 440-amino-acid chain: Thymidine phosphorylase (440 aa).

Belongs to the thymidine/pyrimidine-nucleoside phosphorylase family. Homodimer.

The enzyme catalyses thymidine + phosphate = 2-deoxy-alpha-D-ribose 1-phosphate + thymine. Its pathway is pyrimidine metabolism; dTMP biosynthesis via salvage pathway; dTMP from thymine: step 1/2. Functionally, the enzymes which catalyze the reversible phosphorolysis of pyrimidine nucleosides are involved in the degradation of these compounds and in their utilization as carbon and energy sources, or in the rescue of pyrimidine bases for nucleotide synthesis. This Yersinia pseudotuberculosis serotype O:1b (strain IP 31758) protein is Thymidine phosphorylase.